Consider the following 149-residue polypeptide: MRHRVKKKKLNRPHSQRLALMRGLARELFEHGTIITTTAKAKAVKPFVESIITKAKKAALYAKEINERSNGDPEIQALRSKNVALRREINRHFNDRKLVKKICDEIAVNYIDRNGGYTRIIKVGRRRGDAAELSILQLVETKSEENVEN.

The protein belongs to the bacterial ribosomal protein bL17 family. In terms of assembly, part of the 50S ribosomal subunit. Contacts protein L32.

The chain is Large ribosomal subunit protein bL17 from Kosmotoga olearia (strain ATCC BAA-1733 / DSM 21960 / TBF 19.5.1).